A 204-amino-acid chain; its full sequence is ATP-dependent Clp protease proteolytic subunit (204 aa).

The Nucleophile role is filled by S100. The active site involves H125.

This sequence belongs to the peptidase S14 family. In terms of assembly, fourteen ClpP subunits assemble into 2 heptameric rings which stack back to back to give a disk-like structure with a central cavity, resembling the structure of eukaryotic proteasomes.

It is found in the cytoplasm. It carries out the reaction Hydrolysis of proteins to small peptides in the presence of ATP and magnesium. alpha-casein is the usual test substrate. In the absence of ATP, only oligopeptides shorter than five residues are hydrolyzed (such as succinyl-Leu-Tyr-|-NHMec, and Leu-Tyr-Leu-|-Tyr-Trp, in which cleavage of the -Tyr-|-Leu- and -Tyr-|-Trp bonds also occurs).. Functionally, cleaves peptides in various proteins in a process that requires ATP hydrolysis. Has a chymotrypsin-like activity. Plays a major role in the degradation of misfolded proteins. The chain is ATP-dependent Clp protease proteolytic subunit from Anaeromyxobacter sp. (strain Fw109-5).